We begin with the raw amino-acid sequence, 268 residues long: Undecaprenyl-diphosphatase (268 aa).

Helical transmembrane passes span 5–25 (SIIS…IPVS), 43–63 (GNTF…LVYF), 84–104 (FSVL…HGFI), 107–127 (VLFE…IILY), 184–204 (AAEF…ALDL), 213–233 (FDDV…GIFV), and 248–268 (PFAI…WLLG).

It belongs to the UppP family.

Its subcellular location is the cell inner membrane. The enzyme catalyses di-trans,octa-cis-undecaprenyl diphosphate + H2O = di-trans,octa-cis-undecaprenyl phosphate + phosphate + H(+). Its function is as follows. Catalyzes the dephosphorylation of undecaprenyl diphosphate (UPP). Confers resistance to bacitracin. This chain is Undecaprenyl-diphosphatase, found in Rhizobium meliloti (strain 1021) (Ensifer meliloti).